The sequence spans 246 residues: Flagellar brake protein YcgR (246 aa).

One can recognise a PilZ domain in the interval 122–234 (QRREFFRIQT…PMETIIQRYV (113 aa)).

Belongs to the YcgR family. In terms of assembly, monomer. Interacts with the flagellar basal bodies.

It localises to the bacterial flagellum basal body. In terms of biological role, acts as a flagellar brake, regulating swimming and swarming in a bis-(3'-5') cyclic diguanylic acid (c-di-GMP)-dependent manner. Binds 1 c-di-GMP dimer per subunit. Increasing levels of c-di-GMP lead to decreased motility. The sequence is that of Flagellar brake protein YcgR from Chromobacterium violaceum (strain ATCC 12472 / DSM 30191 / JCM 1249 / CCUG 213 / NBRC 12614 / NCIMB 9131 / NCTC 9757 / MK).